The following is a 169-amino-acid chain: Peptide methionine sulfoxide reductase MsrA (169 aa).

Cys10 is an active-site residue.

The protein belongs to the MsrA Met sulfoxide reductase family.

It catalyses the reaction L-methionyl-[protein] + [thioredoxin]-disulfide + H2O = L-methionyl-(S)-S-oxide-[protein] + [thioredoxin]-dithiol. It carries out the reaction [thioredoxin]-disulfide + L-methionine + H2O = L-methionine (S)-S-oxide + [thioredoxin]-dithiol. Its function is as follows. Has an important function as a repair enzyme for proteins that have been inactivated by oxidation. Catalyzes the reversible oxidation-reduction of methionine sulfoxide in proteins to methionine. This Streptococcus uberis (strain ATCC BAA-854 / 0140J) protein is Peptide methionine sulfoxide reductase MsrA.